Reading from the N-terminus, the 313-residue chain is tRNA dimethylallyltransferase (313 aa).

Residue 10 to 17 participates in ATP binding; the sequence is GPTAVGKS. 12 to 17 lines the substrate pocket; it reads TAVGKS. The interaction with substrate tRNA stretch occupies residues 35 to 38; sequence DSTQ.

It belongs to the IPP transferase family. Monomer. Requires Mg(2+) as cofactor.

The enzyme catalyses adenosine(37) in tRNA + dimethylallyl diphosphate = N(6)-dimethylallyladenosine(37) in tRNA + diphosphate. Its function is as follows. Catalyzes the transfer of a dimethylallyl group onto the adenine at position 37 in tRNAs that read codons beginning with uridine, leading to the formation of N6-(dimethylallyl)adenosine (i(6)A). This is tRNA dimethylallyltransferase from Oceanobacillus iheyensis (strain DSM 14371 / CIP 107618 / JCM 11309 / KCTC 3954 / HTE831).